The primary structure comprises 195 residues: MSLIPWLRWNDTPPRLSARTPAEMVLETLMMELAGQMREVERQQRERRSAVRKICTGVDYSWLANTPRPTYDISPGERLQLEDVCAKIHPSYCGPAILRFRQLLAEREPEVQEVARLFRSVLQEALEKMKQEEEAHKLTRQWSLRPRGSLSSFKTRARIAPFASDIRTISEDVERDAPPPPRTWSMPEFRAPQAD.

The stretch at alanine 22–isoleucine 54 forms a coiled coil. Residues threonine 168 to alanine 177 are compositionally biased toward basic and acidic residues. The tract at residues threonine 168–aspartate 195 is disordered.

In terms of assembly, monomer. Interacts with GUCY2E; promotes the exit of GUCY2E from the endoplasmic reticulum and its trafficking to the photoreceptor outer segments. The interaction with GUCY2E negatively regulates its activity. Interacts with GUCY2F; promotes the exit of GUCY2F from the endoplasmic reticulum and its trafficking to the photoreceptor outer segments. The interaction with GUCY2F negatively regulates its activity. Interacts with GUK1; up-regulates GUK1 activity. In terms of tissue distribution, expressed in the retina and in particular in the inner nuclear layer, in rod and cone outer segments, in the outer nuclear layer, in the outer plexiform layer and in the ganglion cell layer.

It localises to the cell projection. Its subcellular location is the cilium. It is found in the photoreceptor outer segment. The protein localises to the photoreceptor inner segment. The protein resides in the endosome. It localises to the nucleus. Its subcellular location is the cytoplasm. It is found in the perinuclear region. Functionally, plays a critical role in the regulation of enzymes involved in nucleotide cycle in photoreceptors. Inhibits the basal catalytic activity and the GCAP-stimulated activity of GUCY2E and GUCY2F, two retinal guanylyl cyclases involved in the production of cGMP in photoreceptors. Involved in the transport of GUCY2E and GUCY2F to their target sites in the photoreceptor outer segment. Up-regulates the activity of GUK1, a kinase that also plays an essential role for recycling GMP and indirectly, cGMP. Plays an important role for the survival of rods and cones in the retina. The chain is Protein RD3 (Rd3) from Mus musculus (Mouse).